The following is a 387-amino-acid chain: Mannitol-1-phosphate 5-dehydrogenase (387 aa).

Residue 3–14 participates in NAD(+) binding; that stretch reads ALHFGAGNIGRG.

The protein belongs to the mannitol dehydrogenase family.

The catalysed reaction is D-mannitol 1-phosphate + NAD(+) = beta-D-fructose 6-phosphate + NADH + H(+). The polypeptide is Mannitol-1-phosphate 5-dehydrogenase (Yersinia pseudotuberculosis serotype IB (strain PB1/+)).